A 309-amino-acid chain; its full sequence is DnaJ homolog subfamily B member 7 (309 aa).

Residues 3–69 (DYYEVLGLQR…EKRDIYDKYG (67 aa)) enclose the J domain. Residues 282 to 309 (FSAGVKEGGKRKKKKRKEVQKKSTKRNC) are disordered. Positions 290–309 (GKRKKKKRKEVQKKSTKRNC) are enriched in basic residues.

In terms of biological role, probably acts as a co-chaperone. The chain is DnaJ homolog subfamily B member 7 (DNAJB7) from Homo sapiens (Human).